The chain runs to 119 residues: Ribonuclease P protein component (119 aa).

The protein belongs to the RnpA family. In terms of assembly, consists of a catalytic RNA component (M1 or rnpB) and a protein subunit.

It catalyses the reaction Endonucleolytic cleavage of RNA, removing 5'-extranucleotides from tRNA precursor.. In terms of biological role, RNaseP catalyzes the removal of the 5'-leader sequence from pre-tRNA to produce the mature 5'-terminus. It can also cleave other RNA substrates such as 4.5S RNA. The protein component plays an auxiliary but essential role in vivo by binding to the 5'-leader sequence and broadening the substrate specificity of the ribozyme. This is Ribonuclease P protein component from Corynebacterium diphtheriae (strain ATCC 700971 / NCTC 13129 / Biotype gravis).